A 322-amino-acid chain; its full sequence is Ferredoxin--NADP reductase (322 aa).

Residues E37, Q45, Y50, I91, F128, and D290 each contribute to the FAD site.

The protein belongs to the ferredoxin--NADP reductase type 2 family. Homodimer. FAD is required as a cofactor.

It catalyses the reaction 2 reduced [2Fe-2S]-[ferredoxin] + NADP(+) + H(+) = 2 oxidized [2Fe-2S]-[ferredoxin] + NADPH. The chain is Ferredoxin--NADP reductase from Malacoplasma penetrans (strain HF-2) (Mycoplasma penetrans).